The following is a 224-amino-acid chain: ATP-dependent dethiobiotin synthetase BioD (224 aa).

Residue glycine 14–valine 19 coordinates ATP. Residue threonine 18 participates in Mg(2+) binding. Residue lysine 39 is part of the active site. Residue serine 43 coordinates substrate. Residues aspartate 56, glutamate 117 to glycine 120, and asparagine 177 to glutamate 178 contribute to the ATP site. Residues aspartate 56 and glutamate 117 each coordinate Mg(2+).

The protein belongs to the dethiobiotin synthetase family. In terms of assembly, homodimer. Requires Mg(2+) as cofactor.

Its subcellular location is the cytoplasm. The enzyme catalyses (7R,8S)-7,8-diammoniononanoate + CO2 + ATP = (4R,5S)-dethiobiotin + ADP + phosphate + 3 H(+). The protein operates within cofactor biosynthesis; biotin biosynthesis; biotin from 7,8-diaminononanoate: step 1/2. Catalyzes a mechanistically unusual reaction, the ATP-dependent insertion of CO2 between the N7 and N8 nitrogen atoms of 7,8-diaminopelargonic acid (DAPA, also called 7,8-diammoniononanoate) to form a ureido ring. The chain is ATP-dependent dethiobiotin synthetase BioD from Xanthomonas campestris pv. campestris (strain ATCC 33913 / DSM 3586 / NCPPB 528 / LMG 568 / P 25).